The chain runs to 396 residues: Elongation factor Tu (396 aa).

The tr-type G domain occupies 10–206; it reads KPHVNIGTIG…AVDAYIPEPE (197 aa). The segment at 19–26 is G1; the sequence is GHVDHGKT. Position 19–26 (19–26) interacts with GTP; that stretch reads GHVDHGKT. Thr26 lines the Mg(2+) pocket. The segment at 60–64 is G2; sequence GITIA. Residues 81–84 are G3; it reads DCPG. Residues 81–85 and 136–139 contribute to the GTP site; these read DCPGH and NKAD. A G4 region spans residues 136 to 139; that stretch reads NKAD. Residues 174-176 are G5; the sequence is SAL.

It belongs to the TRAFAC class translation factor GTPase superfamily. Classic translation factor GTPase family. EF-Tu/EF-1A subfamily. As to quaternary structure, monomer.

Its subcellular location is the cytoplasm. It catalyses the reaction GTP + H2O = GDP + phosphate + H(+). GTP hydrolase that promotes the GTP-dependent binding of aminoacyl-tRNA to the A-site of ribosomes during protein biosynthesis. This Geobacter metallireducens (strain ATCC 53774 / DSM 7210 / GS-15) protein is Elongation factor Tu.